Consider the following 169-residue polypeptide: MSEEKQNGQIQEETVENSENQNNELEKLQAEYNELKDTYLRANAEFENIKKRMEKEKISATIYANESFAKDLLDVVDALEAAVNVEANDEISLKIKEGVQNTLDLLLKKLEKHMVKVIDAEGEFDPNLHEAMFHVESADHESNHIVQLLQKGYMMNDRIIRSAKVSVAK.

A disordered region spans residues 1 to 25 (MSEEKQNGQIQEETVENSENQNNEL). Positions 7 to 23 (NGQIQEETVENSENQNN) are enriched in polar residues.

The protein belongs to the GrpE family. As to quaternary structure, homodimer.

It localises to the cytoplasm. Its function is as follows. Participates actively in the response to hyperosmotic and heat shock by preventing the aggregation of stress-denatured proteins, in association with DnaK and GrpE. It is the nucleotide exchange factor for DnaK and may function as a thermosensor. Unfolded proteins bind initially to DnaJ; upon interaction with the DnaJ-bound protein, DnaK hydrolyzes its bound ATP, resulting in the formation of a stable complex. GrpE releases ADP from DnaK; ATP binding to DnaK triggers the release of the substrate protein, thus completing the reaction cycle. Several rounds of ATP-dependent interactions between DnaJ, DnaK and GrpE are required for fully efficient folding. The polypeptide is Protein GrpE (Campylobacter lari (strain RM2100 / D67 / ATCC BAA-1060)).